The primary structure comprises 224 residues: Small ribosomal subunit protein uS3 (224 aa).

A KH type-2 domain is found at Leu38–Arg106.

This sequence belongs to the universal ribosomal protein uS3 family. As to quaternary structure, part of the 30S ribosomal subunit. Forms a tight complex with proteins S10 and S14.

In terms of biological role, binds the lower part of the 30S subunit head. Binds mRNA in the 70S ribosome, positioning it for translation. The polypeptide is Small ribosomal subunit protein uS3 (Anaeromyxobacter sp. (strain Fw109-5)).